The primary structure comprises 177 residues: Disulfide bond formation protein B (177 aa).

The Cytoplasmic segment spans residues 1-14; sequence MLIFFKNLSMKRST. The helical transmembrane segment at 15–31 threads the bilayer; sequence WILLFISALVLESTALY. Residues 32 to 49 lie on the Periplasmic side of the membrane; the sequence is FQHGMGLNPCVMCIYERV. An intrachain disulfide couples cysteine 41 to cysteine 44. A helical transmembrane segment spans residues 50 to 65; the sequence is AILGILFSGLIGCIAP. The Cytoplasmic segment spans residues 66 to 72; that stretch reads KWLVLRI. The helical transmembrane segment at 73–90 threads the bilayer; that stretch reads LALLIGLGSAVKGLLLAI. At 91–145 the chain is on the periplasmic side; sequence KHLDYQINVYPWNQCAMVPDFPQTLPLDKWFPNIFMPSGSCSDITWSFLGFSMVQ. Cysteine 105 and cysteine 131 are joined by a disulfide. A helical transmembrane segment spans residues 146–164; the sequence is WIIVIFACYFLFFIILSIS. At 165–177 the chain is on the cytoplasmic side; sequence QFKKVRKNRMLFR.

This sequence belongs to the DsbB family.

The protein resides in the cell inner membrane. Functionally, required for disulfide bond formation in some periplasmic proteins. Acts by oxidizing the DsbA protein. This chain is Disulfide bond formation protein B, found in Histophilus somni (strain 129Pt) (Haemophilus somnus).